The sequence spans 234 residues: Phosphoribosylaminoimidazole-succinocarboxamide synthase (234 aa).

This sequence belongs to the SAICAR synthetase family.

The enzyme catalyses 5-amino-1-(5-phospho-D-ribosyl)imidazole-4-carboxylate + L-aspartate + ATP = (2S)-2-[5-amino-1-(5-phospho-beta-D-ribosyl)imidazole-4-carboxamido]succinate + ADP + phosphate + 2 H(+). It functions in the pathway purine metabolism; IMP biosynthesis via de novo pathway; 5-amino-1-(5-phospho-D-ribosyl)imidazole-4-carboxamide from 5-amino-1-(5-phospho-D-ribosyl)imidazole-4-carboxylate: step 1/2. The polypeptide is Phosphoribosylaminoimidazole-succinocarboxamide synthase (Staphylococcus aureus (strain COL)).